Here is a 248-residue protein sequence, read N- to C-terminus: Probable transcriptional regulatory protein AZC_0510 (248 aa).

Belongs to the TACO1 family.

It is found in the cytoplasm. The polypeptide is Probable transcriptional regulatory protein AZC_0510 (Azorhizobium caulinodans (strain ATCC 43989 / DSM 5975 / JCM 20966 / LMG 6465 / NBRC 14845 / NCIMB 13405 / ORS 571)).